Here is a 1350-residue protein sequence, read N- to C-terminus: Protein transport protein SEC16A homolog (1350 aa).

Disordered stretches follow at residues 26 to 45 (YTPT…GSDS), 73 to 97 (LGND…SIAP), 964 to 1063 (MPPP…TRKV), 1118 to 1216 (AEEA…KPPI), and 1235 to 1350 (QVME…EVEL). Positions 35–45 (KELKFDDGSDS) are enriched in basic and acidic residues. The residue at position 43 (serine 43) is a Phosphoserine. Positions 970 to 1002 (HSTTGNPQVNEYQHQQQEAAKLSYSQSANTMSS) are enriched in polar residues. Positions 1150 to 1168 (SPSSGSWSSGSPTPSENSP) are enriched in low complexity. Polar residues-rich tracts occupy residues 1195–1210 (TYNQ…PPVQ) and 1289–1316 (RSGS…GSVN). Residues 1317–1343 (SSSFMSPTSASTFRPSPLNSSSSSLGE) show a composition bias toward low complexity.

The protein belongs to the SEC16 family. Interacts with SEC13A, SEC13B and SEC31A.

The protein localises to the golgi apparatus. Its subcellular location is the golgi stack. It localises to the endoplasmic reticulum. In terms of biological role, required for efficient protein export from the endoplasmic reticulum (ER) to the Golgi by regulating COPII coat dynamics at the ER. Functions as a scaffold and regulator of COPII coat assembly at ER exit sites. This chain is Protein transport protein SEC16A homolog, found in Arabidopsis thaliana (Mouse-ear cress).